The primary structure comprises 295 residues: Phosphonoacetaldehyde hydrolase (295 aa).

The Nucleophile role is filled by Asp-36. Residues Asp-36 and Ala-38 each coordinate Mg(2+). The Schiff-base intermediate with substrate role is filled by Lys-78. Asp-212 is a binding site for Mg(2+).

The protein belongs to the HAD-like hydrolase superfamily. PhnX family. Homodimer. Mg(2+) is required as a cofactor.

It catalyses the reaction phosphonoacetaldehyde + H2O = acetaldehyde + phosphate + H(+). Functionally, involved in phosphonate degradation. The chain is Phosphonoacetaldehyde hydrolase from Psychromonas ingrahamii (strain DSM 17664 / CCUG 51855 / 37).